The chain runs to 155 residues: Ribonuclease 2B (155 aa).

The N-terminal stretch at 1-25 (MGLKLLESRLCLLLLLGLVLTLVSC) is a signal peptide. The Proton acceptor role is filled by histidine 38. 4 cysteine pairs are disulfide-bonded: cysteine 47–cysteine 106, cysteine 61–cysteine 118, cysteine 79–cysteine 133, and cysteine 86–cysteine 94. 62 to 66 (KDLNT) is a substrate binding site. Residue asparagine 114 is glycosylated (N-linked (GlcNAc...) asparagine). Histidine 150 acts as the Proton donor in catalysis.

The protein belongs to the pancreatic ribonuclease family.

It catalyses the reaction an [RNA] containing cytidine + H2O = an [RNA]-3'-cytidine-3'-phosphate + a 5'-hydroxy-ribonucleotide-3'-[RNA].. The enzyme catalyses an [RNA] containing uridine + H2O = an [RNA]-3'-uridine-3'-phosphate + a 5'-hydroxy-ribonucleotide-3'-[RNA].. Its function is as follows. This is a non-secretory ribonuclease. It is a pyrimidine specific nuclease with a slight preference for U. Cytotoxin and helminthotoxin. Possesses a wide variety of biological activities. The sequence is that of Ribonuclease 2B from Mus musculus (Mouse).